A 375-amino-acid polypeptide reads, in one-letter code: Acetylornithine aminotransferase (375 aa).

Pyridoxal 5'-phosphate contacts are provided by residues 102–103 (GA) and Phe129. Residue Arg132 participates in N(2)-acetyl-L-ornithine binding. Pyridoxal 5'-phosphate is bound at residue 214–217 (DEVQ). Residue Lys243 is modified to N6-(pyridoxal phosphate)lysine. Residue Ser271 coordinates N(2)-acetyl-L-ornithine. Thr272 contacts pyridoxal 5'-phosphate.

It belongs to the class-III pyridoxal-phosphate-dependent aminotransferase family. ArgD subfamily. As to quaternary structure, homodimer. It depends on pyridoxal 5'-phosphate as a cofactor.

The protein resides in the cytoplasm. The catalysed reaction is N(2)-acetyl-L-ornithine + 2-oxoglutarate = N-acetyl-L-glutamate 5-semialdehyde + L-glutamate. It participates in amino-acid biosynthesis; L-arginine biosynthesis; N(2)-acetyl-L-ornithine from L-glutamate: step 4/4. The sequence is that of Acetylornithine aminotransferase from Archaeoglobus fulgidus (strain ATCC 49558 / DSM 4304 / JCM 9628 / NBRC 100126 / VC-16).